The chain runs to 300 residues: Homoserine kinase (300 aa).

87–97 (PISRGLGSSSA) contributes to the ATP binding site.

The protein belongs to the GHMP kinase family. Homoserine kinase subfamily.

The protein localises to the cytoplasm. The enzyme catalyses L-homoserine + ATP = O-phospho-L-homoserine + ADP + H(+). It functions in the pathway amino-acid biosynthesis; L-threonine biosynthesis; L-threonine from L-aspartate: step 4/5. Catalyzes the ATP-dependent phosphorylation of L-homoserine to L-homoserine phosphate. The sequence is that of Homoserine kinase from Clostridium kluyveri (strain ATCC 8527 / DSM 555 / NBRC 12016 / NCIMB 10680 / K1).